The primary structure comprises 256 residues: Trans-aconitate 2-methyltransferase (256 aa).

This sequence belongs to the methyltransferase superfamily. Tam family.

It localises to the cytoplasm. The catalysed reaction is trans-aconitate + S-adenosyl-L-methionine = (E)-3-(methoxycarbonyl)pent-2-enedioate + S-adenosyl-L-homocysteine. Catalyzes the S-adenosylmethionine monomethyl esterification of trans-aconitate. In Agrobacterium fabrum (strain C58 / ATCC 33970) (Agrobacterium tumefaciens (strain C58)), this protein is Trans-aconitate 2-methyltransferase.